Consider the following 370-residue polypeptide: Chorismate synthase (370 aa).

The interval 41–60 (IQGDLDRRKPGTSRHVTQRK) is disordered. Residues arginine 48 and arginine 54 each coordinate NADP(+). FMN is bound by residues 125–127 (RSS), 238–239 (NA), glycine 278, 293–297 (KPTSS), and arginine 319.

This sequence belongs to the chorismate synthase family. Homotetramer. FMNH2 serves as cofactor.

It carries out the reaction 5-O-(1-carboxyvinyl)-3-phosphoshikimate = chorismate + phosphate. It functions in the pathway metabolic intermediate biosynthesis; chorismate biosynthesis; chorismate from D-erythrose 4-phosphate and phosphoenolpyruvate: step 7/7. Its function is as follows. Catalyzes the anti-1,4-elimination of the C-3 phosphate and the C-6 proR hydrogen from 5-enolpyruvylshikimate-3-phosphate (EPSP) to yield chorismate, which is the branch point compound that serves as the starting substrate for the three terminal pathways of aromatic amino acid biosynthesis. This reaction introduces a second double bond into the aromatic ring system. The sequence is that of Chorismate synthase from Cupriavidus pinatubonensis (strain JMP 134 / LMG 1197) (Cupriavidus necator (strain JMP 134)).